The primary structure comprises 817 residues: Protein-glutamine gamma-glutamyltransferase K (817 aa).

Disordered stretches follow at residues 1–38 (MMDGPRSDVGRWGGNPLQPPTTPSPEPEPEPDGRSRRG) and 59–105 (DDWG…DGTI). Residues 1–100 (MMDGPRSDVG…VSRGSGVNAA (100 aa)) are membrane anchorage region. The segment covering 17–26 (LQPPTTPSPE) has biased composition (pro residues). T22 carries the post-translational modification Phosphothreonine. A phosphoserine mark is found at S24, S68, S82, S85, S92, and S95. Over residues 71-84 (RGSSSGTRRPGSRG) the composition is skewed to low complexity. Catalysis depends on residues C377, H436, and D459. N499, D501, E548, and E553 together coordinate Ca(2+). Residues 793 to 817 (GGFFSDAGGDSHLGETIPMASRGGA) are disordered.

This sequence belongs to the transglutaminase superfamily. Transglutaminase family. As to quaternary structure, interacts with PLAAT4. Ca(2+) is required as a cofactor. Post-translationally, palmitoylated. In terms of processing, the membrane anchorage region possesses a cluster of five cysteines within which fatty acid(s) may become thioester-linked. It is subject to phorbol ester-stimulated phosphorylation and is hypersensitive to proteolysis, which releases the enzyme in a soluble form. Tyrosine-phosphorylated.

Its subcellular location is the membrane. The enzyme catalyses L-glutaminyl-[protein] + L-lysyl-[protein] = [protein]-L-lysyl-N(6)-5-L-glutamyl-[protein] + NH4(+). Its function is as follows. Catalyzes the cross-linking of proteins and the conjugation of polyamines to proteins. Responsible for cross-linking epidermal proteins during formation of the stratum corneum. Involved in cell proliferation. The chain is Protein-glutamine gamma-glutamyltransferase K (TGM1) from Homo sapiens (Human).